The primary structure comprises 89 residues: Small ribosomal subunit protein bS16 (89 aa).

Belongs to the bacterial ribosomal protein bS16 family.

The protein is Small ribosomal subunit protein bS16 of Desulforamulus reducens (strain ATCC BAA-1160 / DSM 100696 / MI-1) (Desulfotomaculum reducens).